Consider the following 215-residue polypeptide: Lysozyme-like protein 5 (215 aa).

The signal sequence occupies residues 1–17; sequence MKHFFITILLFCSVVSA. The Ch-type lysozyme domain occupies 18–215; the sequence is ARNGIDINSP…GVSVDMNYIP (198 aa). Catalysis depends on residues Asp-23, Asp-113, and Glu-115.

This sequence belongs to the glycosyl hydrolase 25 family.

Plays a role in resistance to Gram-positive bacteria S.aureus or B.thuringiensis infection. This is Lysozyme-like protein 5 from Caenorhabditis elegans.